The sequence spans 418 residues: Equilibrative nucleotide transporter 6 (418 aa).

11 consecutive transmembrane segments (helical) span residues 19–39 (AMIVYCILGFGSLISWNSMLT), 56–76 (VLTLVYQPFAFGAIVILAYHE), 86–106 (LIGYILYTISTFLLIVLDLAT), 112–132 (FGPYTGLCAVVAAFGLADATV), 142–162 (LMCPELVQSYMGGMAVAGALT), 186–206 (MFLAISTCIELLSVMLYAYVL), 264–284 (HAVNLFLIYVCTLSIFPGFLY), 291–311 (GLGAWYALVLVAMYNCWDLVG), 326–346 (KLITIAVLSRYLLIPAFYFTA), 353–373 (WMIMLVSVLGLTNGHLTVCIM), and 392–412 (LVIFLLGGIFAGVALDWLWLI).

The protein belongs to the SLC29A/ENT transporter (TC 2.A.57) family. As to expression, expressed in leaves and siliques.

It is found in the cell membrane. Functionally, nucleoside transporter that can mediate uptake of adenosine, uridine, guanosine or cytidine when expressed in a heterologous system (yeast). The sequence is that of Equilibrative nucleotide transporter 6 (ENT6) from Arabidopsis thaliana (Mouse-ear cress).